A 147-amino-acid polypeptide reads, in one-letter code: Ponticulin-like protein C5 (147 aa).

The signal sequence occupies residues 1–20 (MKLNNSLLLLIVAIIASSNA). Asn118 carries the GPI-like-anchor amidated asparagine lipid modification. An N-linked (GlcNAc...) asparagine glycan is attached at Asn118. Residues 119–147 (SSESDSSDSTRIGASFALFALALLSMLAL) constitute a propeptide, removed in mature form.

This sequence belongs to the ponticulin family. Post-translationally, the GPI-like-anchor contains a phosphoceramide group, rather than a phosphatidyl group.

It localises to the cell membrane. The sequence is that of Ponticulin-like protein C5 (ponC5) from Dictyostelium discoideum (Social amoeba).